Reading from the N-terminus, the 558-residue chain is Laccase-10 (558 aa).

A signal peptide spans Met1–Gly22. Plastocyanin-like domains are found at residues Asn30–Gly146 and Glu157–Thr308. The N-linked (GlcNAc...) asparagine glycan is linked to Asn76. The Cu cation site is built by His80 and His82. N-linked (GlcNAc...) asparagine glycosylation is present at Asn112. Cu cation contacts are provided by His125 and His127. 7 N-linked (GlcNAc...) asparagine glycosylation sites follow: Asn185, Asn296, Asn323, Asn373, Asn383, Asn400, and Asn441. The Plastocyanin-like 3 domain occupies Asp408–Lys542. The Cu cation site is built by His459, His462, His464, His521, Cys522, His523, and His527. N-linked (GlcNAc...) asparagine glycosylation is present at Asn545.

Belongs to the multicopper oxidase family. It depends on Cu cation as a cofactor. Ubiquitous, with lower levels in siliques.

It is found in the secreted. Its subcellular location is the extracellular space. The protein resides in the apoplast. It carries out the reaction 4 hydroquinone + O2 = 4 benzosemiquinone + 2 H2O. Functionally, lignin degradation and detoxification of lignin-derived products. The chain is Laccase-10 (LAC10) from Arabidopsis thaliana (Mouse-ear cress).